The following is a 377-amino-acid chain: Methylthioribose-1-phosphate isomerase (377 aa).

The active-site Proton donor is Asp254.

Belongs to the eIF-2B alpha/beta/delta subunits family. MtnA subfamily.

Its subcellular location is the cytoplasm. The protein localises to the nucleus. It catalyses the reaction 5-(methylsulfanyl)-alpha-D-ribose 1-phosphate = 5-(methylsulfanyl)-D-ribulose 1-phosphate. Its pathway is amino-acid biosynthesis; L-methionine biosynthesis via salvage pathway; L-methionine from S-methyl-5-thio-alpha-D-ribose 1-phosphate: step 1/6. In terms of biological role, catalyzes the interconversion of methylthioribose-1-phosphate (MTR-1-P) into methylthioribulose-1-phosphate (MTRu-1-P). The protein is Methylthioribose-1-phosphate isomerase (mri1) of Aspergillus terreus (strain NIH 2624 / FGSC A1156).